We begin with the raw amino-acid sequence, 502 residues long: Cytochrome c-552 (502 aa).

The N-terminal stretch at 1 to 25 (MKYLTKSRVIATIAMLGCLSVSAWA) is a signal peptide. Residue H105 coordinates heme c. Heme-binding residues include C133, C136, and K137. The heme c site is built by C171, C174, H175, C220, C223, and H224. 4 residues coordinate Ca(2+): E226, Y227, K271, and Q273. Y227 contacts substrate. H274 is a binding site for substrate. Heme c-binding residues include H285, C292, C295, H296, H311, C324, C327, H328, and H403. The tract at residues 481–502 (RERGLLPEVTPKSVTTPKVDAK) is disordered.

This sequence belongs to the cytochrome c-552 family. Ca(2+) serves as cofactor. The cofactor is heme c.

Its subcellular location is the periplasm. The catalysed reaction is 6 Fe(III)-[cytochrome c] + NH4(+) + 2 H2O = 6 Fe(II)-[cytochrome c] + nitrite + 8 H(+). The protein operates within nitrogen metabolism; nitrate reduction (assimilation). Catalyzes the reduction of nitrite to ammonia, consuming six electrons in the process. This Haemophilus ducreyi (strain 35000HP / ATCC 700724) protein is Cytochrome c-552.